Here is a 102-residue protein sequence, read N- to C-terminus: Small ribosomal subunit protein uS10 (102 aa).

This sequence belongs to the universal ribosomal protein uS10 family. In terms of assembly, part of the 30S ribosomal subunit.

In terms of biological role, involved in the binding of tRNA to the ribosomes. The polypeptide is Small ribosomal subunit protein uS10 (Phenylobacterium zucineum (strain HLK1)).